The chain runs to 747 residues: MPLFKLTGQGKQIDDAMRSFAEKVFASEVKDEGGRHEISPFDVDEICPISLREMQAHIFHMENLSMSMDGRRKRRFQGRKTVNLSIPQSETSSTKLSHIEEFISSSPTYESVPDFQRVQITGDYASGVTVEDFEVVCKGLYRALCIREKYMQKSFQRFPKTPSKYLRNIDGEALVAIESFYPVFTPPPKKGEDPFRREDLPANLGYHLKMKGGVIYIYPDEAAASRDEPKPYPYPNLDDFLDDMNFLLALIAQGPVKTYTHRRLKFLSSKFQVHQMLNEMDELKELKNNPHRDFYNCRKVDTHIHAAACMNQKHLLRFIKKSYHIDADRVVYSTKEKNLTLKELFAQLNMHPYDLTVDSLDVHAGRQTFQRFDKFNDKYNPVGASELRDLYLKTDNYINGEYFATIIKEVGADLVDAKYQHAEPRLSIYGRSPDEWSKLSSWFVGNRIYCPNMTWMIQVPRIYDVFRSKNFLPHFGKMLENIFLPVFEATINPQTHPDLSVFLKHITGFDSVDDESKHSGHMFSSKSPKPEEWTMENNPSYTYYAYYMYANIMVLNCLRKERGMNTFLFRPHCGEAGALTHLMTAFMIADNISHGLNLKKSPVLQYLFFLAQIPIAMSPLSNNSLFLEYAKNPFLDFLQKGLMISLSTDDPMQFHFTKEPLMEEYAIAAQVFKLSTCDMCEVARNSVLQCGISHEEKAKFLGNNYLEEGPVGNDIRRTNVAQIRMAYRYETWCYELNLIAEGLKSTE.

The residue at position 81 (Thr-81) is a Phosphothreonine. The residue at position 85 (Ser-85) is a Phosphoserine. Residue Tyr-216 is modified to Phosphotyrosine. Zn(2+) contacts are provided by His-303 and His-305. Residues His-305 and 374–379 (KFNDKY) contribute to the substrate site. Ser-441 bears the Phosphoserine mark. His-572 provides a ligand contact to Zn(2+). Position 575 (Glu-575) interacts with substrate. The active-site Proton acceptor is the His-594. Residue Asp-649 participates in Zn(2+) binding. 650-653 (DPMQ) provides a ligand contact to substrate.

Belongs to the metallo-dependent hydrolases superfamily. Adenosine and AMP deaminases family. In terms of assembly, homotetramer. Zn(2+) is required as a cofactor.

It catalyses the reaction AMP + H2O + H(+) = IMP + NH4(+). Its pathway is purine metabolism; IMP biosynthesis via salvage pathway; IMP from AMP: step 1/1. In terms of biological role, AMP deaminase plays a critical role in energy metabolism. This is AMP deaminase 1 from Rattus norvegicus (Rat).